A 423-amino-acid polypeptide reads, in one-letter code: UDP-N-acetylglucosamine 1-carboxyvinyltransferase 1 (423 aa).

23–24 (KN) provides a ligand contact to phosphoenolpyruvate. Position 96 (arginine 96) interacts with UDP-N-acetyl-alpha-D-glucosamine. Cysteine 120 serves as the catalytic Proton donor. Cysteine 120 bears the 2-(S-cysteinyl)pyruvic acid O-phosphothioketal mark. UDP-N-acetyl-alpha-D-glucosamine is bound by residues aspartate 309 and valine 331.

It belongs to the EPSP synthase family. MurA subfamily.

The protein localises to the cytoplasm. It carries out the reaction phosphoenolpyruvate + UDP-N-acetyl-alpha-D-glucosamine = UDP-N-acetyl-3-O-(1-carboxyvinyl)-alpha-D-glucosamine + phosphate. The protein operates within cell wall biogenesis; peptidoglycan biosynthesis. In terms of biological role, cell wall formation. Adds enolpyruvyl to UDP-N-acetylglucosamine. The chain is UDP-N-acetylglucosamine 1-carboxyvinyltransferase 1 from Streptococcus pyogenes serotype M3 (strain ATCC BAA-595 / MGAS315).